A 417-amino-acid chain; its full sequence is Carbohydrate sulfotransferase 8 (417 aa).

Residues 1–10 lie on the Cytoplasmic side of the membrane; the sequence is MTPRLGTMRL. The chain crosses the membrane as a helical; Signal-anchor for type II membrane protein span at residues 11 to 31; the sequence is ACMFSSILLFGAAGLLLFISL. Over 32 to 417 the chain is Lumenal; that stretch reads QDPIELSPQQ…NYSKPFSDLY (386 aa). The interval 47 to 101 is disordered; the sequence is FSIRPQQPQHDSHLRISTEKGTRDSPSGSPRGLQLQAPDQPRPHPKAAGSPLRLR. Over residues 56–69 the composition is skewed to basic and acidic residues; it reads HDSHLRISTEKGTR. Asn-121 and Asn-122 each carry an N-linked (GlcNAc...) asparagine glycan. 3'-phosphoadenylyl sulfate is bound by residues 191 to 197 and 251 to 259; these read PKAGCSN and REPFERLVS. N-linked (GlcNAc...) asparagine glycosylation is found at Asn-287, Asn-360, and Asn-408.

The protein belongs to the sulfotransferase 2 family. In terms of tissue distribution, strongly expressed in brain. Weakly expressed in lung and kidney. Weakly expressed in pituitary.

The protein localises to the golgi apparatus membrane. Functionally, catalyzes the transfer of sulfate to position 4 of non-reducing N-acetylgalactosamine (GalNAc) residues in both N-glycans and O-glycans. Required for biosynthesis of glycoprotein hormones lutropin and thyrotropin, by mediating sulfation of their carbohydrate structures. Only active against terminal GalNAcbeta1,GalNAcbeta. Not active toward chondroitin. This Mus musculus (Mouse) protein is Carbohydrate sulfotransferase 8 (Chst8).